Here is a 293-residue protein sequence, read N- to C-terminus: Mediator of RNA polymerase II transcription subunit 27 (293 aa).

This sequence belongs to the Mediator complex subunit 27 family. As to quaternary structure, component of the Mediator complex, which includes at least CDK8, MED4, MED6, MED11, MED14, MED17, MED18, MED20, MED21, MED22, MED27, MED28, MED30 and MED31.

Its subcellular location is the nucleus. Component of the Mediator complex, a coactivator involved in the regulated transcription of nearly all RNA polymerase II-dependent genes. Mediator functions as a bridge to convey information from gene-specific regulatory proteins to the basal RNA polymerase II transcription machinery. Mediator is recruited to promoters by direct interactions with regulatory proteins and serves as a scaffold for the assembly of a functional preinitiation complex with RNA polymerase II and the general transcription factors. Required for activated transcription of the MtnA gene. This chain is Mediator of RNA polymerase II transcription subunit 27 (MED27), found in Drosophila melanogaster (Fruit fly).